The following is a 666-amino-acid chain: MSDSDSKRIDVEAPERVEQHELQVMPVGSTIEVPSLDSTPKLSKRNSSERSLPLRSYSKWSPTEQGATLVWRDLCVYTNVGGSGQRMKRIINNSTGAIQPGTLMALMGSSGSGKTTLMSTLAFRQPAGTVVQGDILINGRRIGPFMHRISGYVYQDDLFLGSLTVLEHLNFMAHLRLDRRVSKEERRLIIKELLERTGLLSAAQTRIGSGDDKKVLSGGERKRLAFAVELLNNPVILFCDEPTTGLDSYSAQQLVATLYELAQKGTTILCTIHQPSSQLFDNFNNVMLLADGRVAFTGSPQHALSFFANHGYYCPEAYNPADFLIGVLATDPGYEQASQRSAQHLCDQFAVSSAAKQRDMLVNLEIHMAQSGNFPFDTEVESFRGVAWYKRFHVVWLRASLTLLRDPTIQWLRFIQKIAMAFIIGACFAGTTEPSQLGVQAVQGALFIMISENTYHPMYSVLNLFPQGFPLFMRETRSGLYSTGQYYAANILALLPGMIIEPLIFVIICYWLTGLRSTFYAFGVTAMCVVLVMNVATACGCFFSTAFNSVPLAMAYLVPLDYIFMITSGIFIQVNSLPVAFWWTQFLSWMLYANEAMTAAQWSGVQNITCFQESADLPCFHTGQDVLDKYSFNESNVYRNLLAMVGLYFGFHLLGYYCLWRRARKL.

At 1-417 the chain is on the cytoplasmic side; sequence MSDSDSKRID…TIQWLRFIQK (417 aa). Positions 26–55 are disordered; that stretch reads PVGSTIEVPSLDSTPKLSKRNSSERSLPLR. Residues 69 to 316 enclose the ABC transporter domain; the sequence is LVWRDLCVYT…FANHGYYCPE (248 aa). 108 to 115 lines the ATP pocket; the sequence is GSSGSGKT. The helical transmembrane segment at 418 to 438 threads the bilayer; sequence IAMAFIIGACFAGTTEPSQLG. The Extracellular portion of the chain corresponds to 439–444; the sequence is VQAVQG. A helical membrane pass occupies residues 445 to 465; that stretch reads ALFIMISENTYHPMYSVLNLF. The Cytoplasmic portion of the chain corresponds to 466 to 490; that stretch reads PQGFPLFMRETRSGLYSTGQYYAAN. Residues 491-511 form a helical membrane-spanning segment; it reads ILALLPGMIIEPLIFVIICYW. Over 512 to 518 the chain is Extracellular; that stretch reads LTGLRST. A helical transmembrane segment spans residues 519–539; that stretch reads FYAFGVTAMCVVLVMNVATAC. The Cytoplasmic segment spans residues 540–551; sequence GCFFSTAFNSVP. A helical membrane pass occupies residues 552–572; the sequence is LAMAYLVPLDYIFMITSGIFI. The Extracellular segment spans residues 573-639; sequence QVNSLPVAFW…YSFNESNVYR (67 aa). Residues N607 and N633 are each glycosylated (N-linked (GlcNAc...) asparagine). Residues 640-660 traverse the membrane as a helical segment; the sequence is NLLAMVGLYFGFHLLGYYCLW. At 661–666 the chain is on the cytoplasmic side; that stretch reads RRARKL.

It belongs to the ABC transporter superfamily. ABCG family. Eye pigment precursor importer (TC 3.A.1.204) subfamily. As to quaternary structure, may form a heterodimer with w/white. Expressed in the eye, specifically in primary pigment cells, secondary pigment cells and retinula cells (at protein level).

The protein resides in the cytoplasmic vesicle membrane. It catalyses the reaction L-kynurenine(out) + ATP + H2O = L-kynurenine(in) + ADP + phosphate + H(+). ATP-dependent transporter of the ATP-binding cassette (ABC) family which transports various molecules including bioamines, neurotransmitters and metabolic intermediates. In the eye and probably in association with w/white, required for the transport of the eye brown pigment precursors, kynurenine and probably tryptophan, into pigment cell granules. In Malpighian tubules and pupal eyes, involved in kynurenine transport. Probably in association with w/white, plays a role in zinc storage granule biogenesis in Malpighian tubule principal epithelial cells. This is Protein scarlet from Drosophila melanogaster (Fruit fly).